A 792-amino-acid polypeptide reads, in one-letter code: Pentatricopeptide repeat-containing protein At4g30700 (792 aa).

PPR repeat units follow at residues 51-81 (DISLLTKLTQRLSDLGAIYYARDIFLSVQRP), 82-117 (DVFLFNVLMRGFSVNESPHSSLSVFAHLRKSTDLKP), 118-152 (NSSTYAFAISAASGFRDDRAGRVIHGQAVVDGCDS), 153-183 (ELLLGSNIVKMYFKFWRVEDARKVFDRMPEK), 184-218 (DTILWNTMISGYRKNEMYVESIQVFRDLINESCTR), 220-254 (DTTTLLDILPAVAELQELRLGMQIHSLATKTGCYS), 255-285 (HDYVLTGFISLYSKCGKIKMGSALFREFRKP), 286-320 (DIVAYNAMIHGYTSNGETELSLSLFKELMLSGARL), 321-352 (RSSTLVSLVPVSGHLMLIYAIHGYCLKSNFLS), 353-383 (HASVSTALTTVYSKLNEIESARKLFDESPEK), 384-418 (SLPSWNAMISGYTQNGLTEDAISLFREMQKSEFSP), 419-453 (NPVTITCILSACAQLGALSLGKWVHDLVRSTDFES), 454-484 (SIYVSTALIGMYAKCGSIAEARRLFDLMTKK), 485-519 (NEVTWNTMISGYGLHGQGQEALNIFYEMLNSGITP), 520-555 (TPVTFLCVLYACSHAGLVKEGDEIFNSMIHRYGFEP), and 556-586 (SVKHYACMVDILGRAGHLQRALQFIEAMSIE). A type E motif region spans residues 591–666 (VWETLLGACR…APGYTLIEIG (76 aa)). The interval 667 to 697 (ETPHVFTSGDQSHPQVKEIYEKLEKLEGKMR) is type E(+) motif. Residues 698–792 (EAGYQPETEL…DGVCSCGDYW (95 aa)) are type DYW motif.

This sequence belongs to the PPR family. PCMP-H subfamily.

The sequence is that of Pentatricopeptide repeat-containing protein At4g30700 (DYW9) from Arabidopsis thaliana (Mouse-ear cress).